Reading from the N-terminus, the 185-residue chain is Ribosome-recycling factor (185 aa).

It belongs to the RRF family.

The protein resides in the cytoplasm. Responsible for the release of ribosomes from messenger RNA at the termination of protein biosynthesis. May increase the efficiency of translation by recycling ribosomes from one round of translation to another. This chain is Ribosome-recycling factor, found in Pseudomonas paraeruginosa (strain DSM 24068 / PA7) (Pseudomonas aeruginosa (strain PA7)).